We begin with the raw amino-acid sequence, 161 residues long: Glycine-rich RNA-binding protein blt801 (161 aa).

The RRM domain occupies Y6–S84. The disordered stretch occupies residues L72–E161. S87 carries the post-translational modification Phosphoserine; by PKA. Over residues G89 to E161 the composition is skewed to gly residues.

Its function is as follows. Binds single-stranded DNA and homoribopolymers of guanine, uracil and adenine, but not cytosine. Also binds RNA, with a preference for RNA containing a high proportion of adenine within an open loop structure. Possibly has a role in RNA transcription or processing during stress. The sequence is that of Glycine-rich RNA-binding protein blt801 from Hordeum vulgare (Barley).